The following is a 130-amino-acid chain: Protein ApaG (130 aa).

Positions 3-127 (RAVTRNIEVQ…FSLDLPGTRR (125 aa)) constitute an ApaG domain.

This chain is Protein ApaG, found in Mesorhizobium japonicum (strain LMG 29417 / CECT 9101 / MAFF 303099) (Mesorhizobium loti (strain MAFF 303099)).